A 91-amino-acid chain; its full sequence is Co-chaperonin GroES (91 aa).

This sequence belongs to the GroES chaperonin family. In terms of assembly, heptamer of 7 subunits arranged in a ring. Interacts with the chaperonin GroEL.

It is found in the cytoplasm. Its function is as follows. Together with the chaperonin GroEL, plays an essential role in assisting protein folding. The GroEL-GroES system forms a nano-cage that allows encapsulation of the non-native substrate proteins and provides a physical environment optimized to promote and accelerate protein folding. GroES binds to the apical surface of the GroEL ring, thereby capping the opening of the GroEL channel. In Oenococcus oeni (strain ATCC BAA-331 / PSU-1), this protein is Co-chaperonin GroES.